Reading from the N-terminus, the 328-residue chain is Transcription initiation factor TFIID subunit 8 (328 aa).

Positions 16–83 (RRILNKVVSQ…DVSLALINMG (68 aa)) constitute a Histone-fold domain. Residues 229–309 (NRTEDEPSKD…PGTMPSRSLA (81 aa)) are disordered. S236, S245, and S255 each carry phosphoserine. Residues 239–251 (DGEEGDSENEEMD) are compositionally biased toward acidic residues. The segment covering 252 to 264 (GDKSKEEKPELDI) has biased composition (basic and acidic residues). Positions 296–309 (NCPTPGTMPSRSLA) are enriched in polar residues.

This sequence belongs to the TAF8 family. As to quaternary structure, belongs to the TFIID complex which is composed of TATA binding protein (Tbp) and a number of TBP-associated factors (TAFs). Histone fold interacts with N-terminus of Taf10b.

The protein resides in the nucleus. TFIID is a multimeric protein complex that plays a central role in mediating promoter responses to various activators and repressors. This is Transcription initiation factor TFIID subunit 8 from Drosophila melanogaster (Fruit fly).